We begin with the raw amino-acid sequence, 382 residues long: DnaJ homolog dnj-20 (382 aa).

A signal peptide spans 1 to 21 (MRILNVSLLVLTAFLVDFVEC). Residues 24–89 (DFYKILGVSK…EKRAMYDRHG (66 aa)) enclose the J domain.

This chain is DnaJ homolog dnj-20, found in Caenorhabditis briggsae.